The primary structure comprises 214 residues: Heat shock protein 26 (214 aa).

S2 bears the N-acetylserine mark. Phosphothreonine is present on T42. The sHSP domain maps to 86–207 (GFPRSVAVPV…KNHVKKIEVS (122 aa)). S90 is subject to Phosphoserine. Position 163 is a phosphothreonine (T163). The interval 192 to 214 (KPQKDGKNHVKKIEVSSQESWGN) is disordered. The segment covering 193–205 (PQKDGKNHVKKIE) has biased composition (basic and acidic residues). Residues S208 and S211 each carry the phosphoserine modification.

It belongs to the small heat shock protein (HSP20) family. In terms of assembly, present in large complexes.

In terms of biological role, not known. One of the major polypeptides produced on heat shock. The polypeptide is Heat shock protein 26 (HSP26) (Saccharomyces cerevisiae (strain ATCC 204508 / S288c) (Baker's yeast)).